The sequence spans 342 residues: tRNA N6-adenosine threonylcarbamoyltransferase (342 aa).

2 residues coordinate Fe cation: His-114 and His-118. Residues 136-140 (LVSGG), Asp-169, Gly-182, Asp-186, and Asn-275 contribute to the substrate site. Fe cation is bound at residue Asp-301.

Belongs to the KAE1 / TsaD family. Requires Fe(2+) as cofactor.

It is found in the cytoplasm. The enzyme catalyses L-threonylcarbamoyladenylate + adenosine(37) in tRNA = N(6)-L-threonylcarbamoyladenosine(37) in tRNA + AMP + H(+). Its function is as follows. Required for the formation of a threonylcarbamoyl group on adenosine at position 37 (t(6)A37) in tRNAs that read codons beginning with adenine. Is involved in the transfer of the threonylcarbamoyl moiety of threonylcarbamoyl-AMP (TC-AMP) to the N6 group of A37, together with TsaE and TsaB. TsaD likely plays a direct catalytic role in this reaction. This chain is tRNA N6-adenosine threonylcarbamoyltransferase, found in Streptococcus pyogenes serotype M3 (strain ATCC BAA-595 / MGAS315).